A 165-amino-acid chain; its full sequence is Chorismate pyruvate-lyase (165 aa).

Positions 35, 77, 115, and 156 each coordinate substrate.

It belongs to the UbiC family. As to quaternary structure, monomer.

The protein resides in the cytoplasm. It catalyses the reaction chorismate = 4-hydroxybenzoate + pyruvate. It functions in the pathway cofactor biosynthesis; ubiquinone biosynthesis. In terms of biological role, removes the pyruvyl group from chorismate, with concomitant aromatization of the ring, to provide 4-hydroxybenzoate (4HB) for the ubiquinone pathway. In Salmonella schwarzengrund (strain CVM19633), this protein is Chorismate pyruvate-lyase.